A 674-amino-acid chain; its full sequence is Sodium/myo-inositol cotransporter 2 (674 aa).

Over 1 to 25 (MESSASSPPLTQSDPLEAFPRRTLE) the chain is Extracellular. The helical transmembrane segment at 26-46 (AGDIAVLVLYFLFVLAVGLWS) threads the bilayer. The Cytoplasmic segment spans residues 47–56 (TVKTKRDTVK). Residues 57–77 (GYFLAGGNMLWWPVGASLFAS) traverse the membrane as a helical segment. Residues 78–102 (NVGSGHFVGLAGSGAAAGLSVTAYE) lie on the Extracellular side of the membrane. Residues 103-123 (LNGLFFVLMLSWIFLPIYITG) form a helical membrane-spanning segment. Topologically, residues 124–140 (QVTTMPEYLRKRFGGNR) are cytoplasmic. The chain crosses the membrane as a helical span at residues 141-161 (IPIILAVLYLFIYIFTKISVD). Over 162 to 180 (MYAGAIFIQQSLHVNLYLA) the chain is Extracellular. The chain crosses the membrane as a helical span at residues 181–201 (IVGLLAVTALYTIAGGLAAVI). At 202–208 (YTDALQT) the chain is on the cytoplasmic side. The chain crosses the membrane as a helical span at residues 209–229 (LIMLIGALILMGYSFAAVGGL). Residues 230–272 (EGLEEKYFLAMASNRSGNSSCGLPREDAFHIFRDPVTSDLPWP) are Extracellular-facing. Residues 273-293 (GILFGMSIPSLWYWCTDQVIV) traverse the membrane as a helical segment. The Cytoplasmic portion of the chain corresponds to 294–308 (QRTLAAKNLSHAKGG). Residues 309–329 (SLMAAYLKVLPLFIMVFPGMV) form a helical membrane-spanning segment. Topologically, residues 330 to 374 (SRVLFPDEVACADPEICRKVCSNPAGCSDIAYPKLVLELLPTGLR) are extracellular. A helical membrane pass occupies residues 375-397 (GLMMAVMVAALTSSLTSIFNSAS). Over 398-418 (TIFTMDLWNHLRPRASEKELM) the chain is Cytoplasmic. A helical membrane pass occupies residues 419 to 439 (IVGRVFVLLLVLVSILWIPVV). Residues 440–446 (QASQGGQ) are Extracellular-facing. The helical transmembrane segment at 447-467 (LFIYIQSISSYLQPPVAVVFI) threads the bilayer. Topologically, residues 468-479 (MGCFWKRANEKG) are cytoplasmic. Residues 480 to 500 (AFFGLVLGLLLGLVRLILDFI) traverse the membrane as a helical segment. At 501 to 521 (YVQPRCDQLDERPAVVKDVHY) the chain is on the extracellular side. Residues 522–542 (LYFSMILSSVTLITVCAVSWF) traverse the membrane as a helical segment. The Cytoplasmic portion of the chain corresponds to 543–653 (TEPPSKEMVS…SLEENPLVKT (111 aa)). Residues 567–589 (EQVPSATPPPLTLSQNGTPEASG) are disordered. The span at 578–589 (TLSQNGTPEASG) shows a compositional bias: polar residues. The chain crosses the membrane as a helical span at residues 654-674 (LLDLNLIICISCAIFLWGYFA).

Belongs to the sodium:solute symporter (SSF) (TC 2.A.21) family.

The protein localises to the membrane. Its subcellular location is the apical cell membrane. It carries out the reaction myo-inositol(out) + 2 Na(+)(out) = myo-inositol(in) + 2 Na(+)(in). The catalysed reaction is 1D-chiro-inositol(out) + 2 Na(+)(out) = 1D-chiro-inositol(in) + 2 Na(+)(in). The enzyme catalyses D-glucose(out) + 2 Na(+)(out) = D-glucose(in) + 2 Na(+)(in). It catalyses the reaction D-xylose(out) + 2 Na(+)(out) = D-xylose(in) + 2 Na(+)(in). Its activity is regulated as follows. MI transport activity inhibited by D-chiro-inositol (DCI), phlorizin (Pz) and sodium (Na(+)). Insulin increases D-chiro-inositol uptake. Involved in the sodium-dependent cotransport of myo-inositol (MI) with a Na(+):MI stoichiometry of 2:1. Exclusively responsible for apical MI transport and absorption in intestine. Can also transport D-chiro-inositol (DCI) but not L-fucose. Exhibits stereospecific cotransport of both D-glucose and D-xylose. May induce apoptosis through the TNF-alpha, PDCD1 pathway. May play a role in the regulation of MI concentration in serum, involving reabsorption in at least the proximal tubule of the kidney. In Bos taurus (Bovine), this protein is Sodium/myo-inositol cotransporter 2.